Reading from the N-terminus, the 202-residue chain is Snake venom metalloproteinase leucurolysin-A (202 aa).

The residue at position 1 (Q1) is a Pyrrolidone carboxylic acid. Residues 6 to 202 (RYIELVVVAD…HNPQCILNKP (197 aa)) enclose the Peptidase M12B domain. E9 and D93 together coordinate Ca(2+). Cystine bridges form between C117-C197, C157-C181, and C159-C164. Position 142 (H142) interacts with Zn(2+). The active site involves E143. Zn(2+) is bound by residues H146 and H152. C197 and N200 together coordinate Ca(2+).

This sequence belongs to the venom metalloproteinase (M12B) family. P-I subfamily. Monomer. Requires Zn(2+) as cofactor. As to expression, expressed by the venom gland.

The protein resides in the secreted. With respect to regulation, inhibited by EDTA and 2-mercaptoethanol. Inhibited by 1 mM zinc ion and to a lesser extent by 1 mM calcium ion. Functionally, non-hemorrhagic metalloproteinase that hydrolyzes the alpha chains of fibrinogen, as well as fibrin, fibronectin and casein. Beta and gamma chains are also hydrolyzed, but more slowly. Thrombolytic activity is also observed. Induces detachment of endothelial cells followed by death, and inhibits endothelial cell adhesion to fibronectin. Induces edema in mouse paw. Inhibits ADP-induced platelet aggregation on human platelet-rich plasma with an IC(50) of 2.8 uM. This chain is Snake venom metalloproteinase leucurolysin-A, found in Bothrops leucurus (Whitetail lancehead).